The primary structure comprises 149 residues: Transcriptional regulator MraZ (149 aa).

SpoVT-AbrB domains are found at residues 7–54 (KYVN…GISH) and 83–126 (ALQL…QPQN).

The protein belongs to the MraZ family. As to quaternary structure, forms oligomers.

It localises to the cytoplasm. Its subcellular location is the nucleoid. The polypeptide is Transcriptional regulator MraZ (Rickettsia canadensis (strain McKiel)).